We begin with the raw amino-acid sequence, 391 residues long: 8-amino-7-oxononanoate synthase (391 aa).

A substrate-binding site is contributed by Arg19. 106–107 (GY) contacts pyridoxal 5'-phosphate. His131 contacts substrate. Pyridoxal 5'-phosphate-binding residues include Ser178, His206, and Thr234. Position 237 is an N6-(pyridoxal phosphate)lysine (Lys237). Thr353 serves as a coordination point for substrate.

This sequence belongs to the class-II pyridoxal-phosphate-dependent aminotransferase family. BioF subfamily. In terms of assembly, homodimer. Requires pyridoxal 5'-phosphate as cofactor.

The enzyme catalyses 6-carboxyhexanoyl-[ACP] + L-alanine + H(+) = (8S)-8-amino-7-oxononanoate + holo-[ACP] + CO2. Its pathway is cofactor biosynthesis; biotin biosynthesis. In terms of biological role, catalyzes the decarboxylative condensation of pimeloyl-[acyl-carrier protein] and L-alanine to produce 8-amino-7-oxononanoate (AON), [acyl-carrier protein], and carbon dioxide. The protein is 8-amino-7-oxononanoate synthase of Geobacter metallireducens (strain ATCC 53774 / DSM 7210 / GS-15).